Reading from the N-terminus, the 170-residue chain is VIP peptides (170 aa).

The N-terminal stretch at Met-1–Ser-21 is a signal peptide. A propeptide spanning residues Gln-22–Ala-79 is cleaved from the precursor. Ser-76 carries the phosphoserine modification. Ile-107 is subject to Isoleucine amide. N-linked (GlcNAc...) asparagine glycosylation occurs at Asn-133. Asn-152 is modified (asparagine amide). Residues Ser-156–Lys-170 constitute a propeptide that is removed on maturation.

This sequence belongs to the glucagon family.

It localises to the secreted. VIP is a neuropeptide involved in a diverse array of physiological processes through activating the PACAP subfamily of class B1 G protein-coupled receptors: VIP receptor 1 (VPR1) and VIP receptor 2 (VPR2). Abundantly expressed throughout the CNS and peripheral nervous systems where they primarily exert neuroprotective and immune modulatory roles. Also causes vasodilation, lowers arterial blood pressure, stimulates myocardial contractility, increases glycogenolysis and relaxes the smooth muscle of trachea, stomach and gall bladder. Functionally, PHM-27 and PHV-42 are two bioactive forms from proteolysis of the same precursor protein, that cause vasodilation. PHM-27 is a potent agonist of the calcitonin receptor CALCR, with similar efficacy as calcitonin. This chain is VIP peptides (Vip), found in Mus musculus (Mouse).